We begin with the raw amino-acid sequence, 498 residues long: MASQGTKRSYEQMETDGERQNATEIRASVGKMIDGIGRFYIQMCTELKLSDYEGRLIQNSLTIERMVLSAFDERRNRYLEEHPSAGKDPKKTGGPIYRRVGGKWIRELILYDKEEIRRIWRQANNGDDATRGLTHMMIWHSNLNDATYQRTRALVRTGMDPRMCSLMQGSTLPRRSGAAGAAVKGVGTMVMELIRMIKRGINDRNFWRGENGRKTRSAYERMCNILKGKFQTAAQRAMMDQVRESRNPGNAEIEDLIFSARSALILRGSVAHKSCLPACVYGPAVSSGYDFEKEGYSLVGIDPFKLLQNSQVYSLIRPNENPAHKSQLVWMACHSAAFEDLRLLSFIRGTKVSPRGKLSTRGVQIASNENMDTMESSTLELRSRYWAIRTRSGGNTNQQRASAGQISVQPTFSVQRNLPFDKSTVMAAFTGNTEGRTSDMRAEIIRMMENAKPEEVSFRGRGVFELSDEKATNPIVPSFDMSNEGSYFFGDNAEEYDN.

The Unconventional nuclear localization signal signature appears at 1–18 (MASQGTKRSYEQMETDGE). The segment at 1-21 (MASQGTKRSYEQMETDGERQN) is disordered. Basic and acidic residues predominate over residues 8 to 21 (RSYEQMETDGERQN). Positions 198 to 216 (KRGINDRNFWRGENGRKTR) match the Bipartite nuclear localization signal motif.

The protein belongs to the influenza viruses nucleoprotein family. In terms of assembly, homomultimerizes to form the nucleocapsid. May bind host exportin-1/XPO1. Binds to viral genomic RNA. Protein-RNA contacts are mediated by a combination of electrostatic interactions between positively charged residues and the phosphate backbone and planar interactions between aromatic side chains and bases. Late in virus-infected cells, may be cleaved from a 56-kDa protein to a 53-kDa protein by a cellular caspase. This cleavage might be a marker for the onset of apoptosis in infected cells or have a specific function in virus host interaction.

It localises to the virion. The protein localises to the host nucleus. Encapsidates the negative strand viral RNA, protecting it from nucleases. The encapsidated genomic RNA is termed the ribonucleoprotein (RNP) and serves as template for transcription and replication. The RNP needs to be localized in the host nucleus to start an infectious cycle, but is too large to diffuse through the nuclear pore complex. NP comprises at least 2 nuclear localization signals that are responsible for the active RNP import into the nucleus through cellular importin alpha/beta pathway. Later in the infection, nclear export of RNPs are mediated through viral proteins NEP interacting with M1 which binds nucleoproteins. It is possible that nucleoprotein binds directly host exportin-1/XPO1 and plays an active role in RNPs nuclear export. M1 interaction with RNP seems to hide nucleoprotein's nuclear localization signals. Soon after a virion infects a new cell, M1 dissociates from the RNP under acidification of the virion driven by M2 protein. Dissociation of M1 from RNP unmasks nucleoprotein's nuclear localization signals, targeting the RNP to the nucleus. This is Nucleoprotein from Aves (whales).